The following is a 279-amino-acid chain: ANKRPAWIMGHMVNAIAQIDEFVNLGANSIETDVSFDSSANPEYTYHGIPCDCGRTCTKWENFNDFLVGLRKATTPDDSNYHEKLILVVFDLKTGSLYDNQAYDAGKKLAKSILQHYWNNGNNGGRAYIVLSIPNLAHYKLITGFKETLTSDGHPELMDKIGYDFSGNDAIGDVASAYQKAGVTGHVWQSDGITNCLLRGLSRVREAVANRDSSNGYINKVYYWTVDKRASTRDALDAGVDGIMTNYPDVIADVLSESAYSAKFRIATYDDNPWETFKN.

His-11 is a catalytic residue. Mg(2+)-binding residues include Glu-31 and Asp-33. Residue His-47 is the Nucleophile of the active site. 2 disulfides stabilise this stretch: Cys-51–Cys-57 and Cys-53–Cys-196. Asp-91 provides a ligand contact to Mg(2+).

This sequence belongs to the arthropod phospholipase D family. Class II subfamily. Class IIa sub-subfamily. The cofactor is Mg(2+). Expressed by the venom gland.

It is found in the secreted. The enzyme catalyses an N-(acyl)-sphingosylphosphocholine = an N-(acyl)-sphingosyl-1,3-cyclic phosphate + choline. The catalysed reaction is an N-(acyl)-sphingosylphosphoethanolamine = an N-(acyl)-sphingosyl-1,3-cyclic phosphate + ethanolamine. It carries out the reaction a 1-acyl-sn-glycero-3-phosphocholine = a 1-acyl-sn-glycero-2,3-cyclic phosphate + choline. It catalyses the reaction a 1-acyl-sn-glycero-3-phosphoethanolamine = a 1-acyl-sn-glycero-2,3-cyclic phosphate + ethanolamine. In terms of biological role, dermonecrotic toxins cleave the phosphodiester linkage between the phosphate and headgroup of certain phospholipids (sphingolipid and lysolipid substrates), forming an alcohol (often choline) and a cyclic phosphate. This toxin acts on sphingomyelin (SM) with high activity (about 30.5-31.5 U/mg). It may also act on ceramide phosphoethanolamine (CPE), lysophosphatidylcholine (LPC) and lysophosphatidylethanolamine (LPE), but not on lysophosphatidylserine (LPS), and lysophosphatidylglycerol (LPG). It acts by transphosphatidylation, releasing exclusively cyclic phosphate products as second products. Induces dermonecrosis, hemolysis, increased vascular permeability, edema, inflammatory response, and platelet aggregation. Is lethal to mice. The protein is Dermonecrotic toxin LbSicTox-alphaIB1a of Loxosceles boneti (North American fiddleback spider).